A 160-amino-acid chain; its full sequence is Baculoviral IAP repeat-containing protein 5.1-B (160 aa).

One copy of the BIR repeat lies at Gln-13 to Trp-83. At Thr-43 the chain carries Phosphothreonine; by CDK1. Residues Cys-66, Cys-69, His-86, and Cys-93 each coordinate Zn(2+).

The protein belongs to the IAP family. As to quaternary structure, component of the CPC at least composed of survivin/birc5, incenp, cdca8/borealin and/or cdca9/dasra-A, and aurkb/aurora-B. Interacts directly with incenp (via N-terminus), and may weakly interact with aurkb (via N-terminus) to stabilize the complex. Interacts with GTP-bound ran in both the S and M phases of the cell cycle. Also found in a complex with ubiquitin-mediated signaling proteins including at least usp9x/xFAM, nploc4/npl4 and ufd1. Post-translationally, ubiquitination is required for centrosome-targeting.

It localises to the cytoplasm. It is found in the nucleus. Its subcellular location is the chromosome. The protein resides in the centromere. The protein localises to the cytoskeleton. It localises to the spindle. In terms of biological role, component of the chromosomal passenger complex (CPC), a complex that acts as a key regulator of mitosis. The CPC complex has essential functions at the centromere in ensuring correct chromosome alignment and segregation and is required for chromatin-induced microtubule stabilization and spindle assembly. Stimulates the mitotic kinase activity of aurkb/aurora-B in the CPC. Does not appear to exhibit anti-apoptotic activity. CPC. Does not appear to exhibit anti-apoptotic activity. This Xenopus laevis (African clawed frog) protein is Baculoviral IAP repeat-containing protein 5.1-B (birc5.1-b).